A 30-amino-acid polypeptide reads, in one-letter code: Bacteriocin plantaricin KL-1Y (30 aa).

It localises to the secreted. Bacteriocin with activity against species of Lactobacillus, Lactococcus, Pediococcus, Leuconostoc and against B.subtilis and, to a lesser extent, against B.coagulans, B.cereus and species of Enterococcus, Listeria, Kocuria, Staphylococcus, Corynebacterium, Salmonella, Pseudomonas and Escherichia. The chain is Bacteriocin plantaricin KL-1Y from Lactiplantibacillus plantarum (Lactobacillus plantarum).